Reading from the N-terminus, the 250-residue chain is NAD(P)H-quinone oxidoreductase subunit K, chloroplastic (250 aa).

Residues C67, C68, C132, and C163 each coordinate [4Fe-4S] cluster.

This sequence belongs to the complex I 20 kDa subunit family. In terms of assembly, NDH is composed of at least 16 different subunits, 5 of which are encoded in the nucleus. The cofactor is [4Fe-4S] cluster.

It localises to the plastid. It is found in the chloroplast thylakoid membrane. It carries out the reaction a plastoquinone + NADH + (n+1) H(+)(in) = a plastoquinol + NAD(+) + n H(+)(out). The catalysed reaction is a plastoquinone + NADPH + (n+1) H(+)(in) = a plastoquinol + NADP(+) + n H(+)(out). Functionally, NDH shuttles electrons from NAD(P)H:plastoquinone, via FMN and iron-sulfur (Fe-S) centers, to quinones in the photosynthetic chain and possibly in a chloroplast respiratory chain. The immediate electron acceptor for the enzyme in this species is believed to be plastoquinone. Couples the redox reaction to proton translocation, and thus conserves the redox energy in a proton gradient. The sequence is that of NAD(P)H-quinone oxidoreductase subunit K, chloroplastic from Adiantum capillus-veneris (Maidenhair fern).